Here is a 140-residue protein sequence, read N- to C-terminus: Large ribosomal subunit protein uL11 (140 aa).

It belongs to the universal ribosomal protein uL11 family. As to quaternary structure, part of the ribosomal stalk of the 50S ribosomal subunit. Interacts with L10 and the large rRNA to form the base of the stalk. L10 forms an elongated spine to which L12 dimers bind in a sequential fashion forming a multimeric L10(L12)X complex. In terms of processing, one or more lysine residues are methylated.

Forms part of the ribosomal stalk which helps the ribosome interact with GTP-bound translation factors. In Lawsonia intracellularis (strain PHE/MN1-00), this protein is Large ribosomal subunit protein uL11.